We begin with the raw amino-acid sequence, 296 residues long: Tyrosine recombinase XerC (296 aa).

A Core-binding (CB) domain is found at 1 to 84; the sequence is MDKIQETFLY…TLRTFYEFWM (84 aa). Positions 105–286 constitute a Tyr recombinase domain; that stretch reads YLPQFFYEEE…SNQQLRKVYL (182 aa). Active-site residues include Arg145, Lys169, His238, Arg241, and His264. Tyr273 acts as the O-(3'-phospho-DNA)-tyrosine intermediate in catalysis.

Belongs to the 'phage' integrase family. XerC subfamily. Forms a cyclic heterotetrameric complex composed of two molecules of XerC and two molecules of XerD.

The protein localises to the cytoplasm. Functionally, site-specific tyrosine recombinase, which acts by catalyzing the cutting and rejoining of the recombining DNA molecules. The XerC-XerD complex is essential to convert dimers of the bacterial chromosome into monomers to permit their segregation at cell division. It also contributes to the segregational stability of plasmids. This Staphylococcus epidermidis (strain ATCC 35984 / DSM 28319 / BCRC 17069 / CCUG 31568 / BM 3577 / RP62A) protein is Tyrosine recombinase XerC.